We begin with the raw amino-acid sequence, 98 residues long: Small ribosomal subunit protein uS17B (98 aa).

The protein belongs to the universal ribosomal protein uS17 family. In terms of assembly, part of the 30S ribosomal subunit.

Its function is as follows. One of the primary rRNA binding proteins, it binds specifically to the 5'-end of 16S ribosomal RNA. This Bacteroides thetaiotaomicron (strain ATCC 29148 / DSM 2079 / JCM 5827 / CCUG 10774 / NCTC 10582 / VPI-5482 / E50) protein is Small ribosomal subunit protein uS17B.